Here is a 409-residue protein sequence, read N- to C-terminus: bZIP transcription factor 16 (409 aa).

The span at 1–16 shows a compositional bias: basic and acidic residues; that stretch reads MASNEMEKSSKEKEPK. Disordered regions lie at residues 1–63, 118–236, 274–327, and 362–409; these read MASN…VASS, NGMT…LPVS, MHGK…LRKQ, and TTEN…KDST. Over residues 24–34 the composition is skewed to low complexity; the sequence is APPSSQEPSSA. A compositionally biased stretch (basic and acidic residues) spans 133–145; that stretch reads GDAKQSEVKEKLP. Polar residues predominate over residues 152–178; the sequence is SLGSLNMITGKNNEPGKNSGASANGAY. A compositionally biased stretch (low complexity) spans 179-203; it reads SKSGESASDGSSEGSDGNSQNDSGS. Positions 216-228 are enriched in polar residues; it reads NGGSANGPQNGSA. Residues 305–368 enclose the bZIP domain; sequence ELKRQRRKQS…EELTTENTSL (64 aa). The short motif at 307–323 is the Bipartite nuclear localization signal element; that stretch reads KRQRRKQSNRESARRSR. The tract at residues 307–326 is basic motif; that stretch reads KRQRRKQSNRESARRSRLRK. Positions 314-327 are enriched in basic and acidic residues; sequence SNRESARRSRLRKQ. The interval 333-368 is leucine-zipper; that stretch reads LAQRAEVLNEENTNLRAEINKLKSQCEELTTENTSL. Residues 398 to 409 show a composition bias toward basic and acidic residues; it reads AERKVDSYKDST.

The protein belongs to the bZIP family. Monomer, homodimer and heterodimers with BZIP68 and GBF1/BZIP41. Heterodimers with GBF2/BZIP54 and GBF3/BZIP55. Binds DNA as monomer and forms homo- and heterodimers. The monomeric form is redox regulated. Interacts with GIP1.

Its subcellular location is the nucleus. Transcriptional activator that binds to the G-box motif (5'-CACGTG-3') and other cis-acting elements with 5'-ACGT-3' core, such as Hex, C-box and as-1 motifs. Possesses high binding affinity to G-box, much lower affinity to Hex and C-box, and little affinity to as-1 element. G-box and G-box-like motifs are cis-acting elements defined in promoters of certain plant genes which are regulated by such diverse stimuli as light-induction or hormone control. Binds to the G-box motif 5'-CACGTG-3' of LHCB2.4 (At3g27690) promoter. May act as transcriptional repressor in light-regulated expression of LHCB2.4. Binds DNA as monomer. DNA-binding activity is redox-dependent. The chain is bZIP transcription factor 16 from Arabidopsis thaliana (Mouse-ear cress).